The following is a 355-amino-acid chain: Probable butyrate kinase (355 aa).

It belongs to the acetokinase family.

It is found in the cytoplasm. It carries out the reaction butanoate + ATP = butanoyl phosphate + ADP. This chain is Probable butyrate kinase, found in Clostridium botulinum (strain Eklund 17B / Type B).